Reading from the N-terminus, the 134-residue chain is Large ribosomal subunit protein eL14z (134 aa).

The protein belongs to the eukaryotic ribosomal protein eL14 family.

The protein is Large ribosomal subunit protein eL14z (RPL14A) of Arabidopsis thaliana (Mouse-ear cress).